The sequence spans 1047 residues: Atrial natriuretic peptide receptor 2 (1047 aa).

The N-terminal stretch at M1 to G16 is a signal peptide. The Extracellular portion of the chain corresponds to V17–I458. N-linked (GlcNAc...) asparagine glycans are attached at residues N24 and N35. An intrachain disulfide couples C75 to C101. N-linked (GlcNAc...) asparagine glycosylation is found at N161, N195, N244, N277, and N349. Residues V459–F478 traverse the membrane as a helical segment. Topologically, residues R479–L1047 are cytoplasmic. At S513 the chain carries Phosphoserine. In terms of domain architecture, Protein kinase spans S513–I786. T516 bears the Phosphothreonine mark. S518, S522, S523, and S526 each carry phosphoserine. T529 carries the phosphothreonine modification. The Guanylate cyclase domain maps to T861 to E991.

This sequence belongs to the adenylyl cyclase class-4/guanylyl cyclase family. In terms of processing, phosphorylated. Phosphorylation of the protein kinase-like domain is required for full activation by CNP. Glycosylated.

Its subcellular location is the cell membrane. It carries out the reaction GTP = 3',5'-cyclic GMP + diphosphate. In terms of biological role, receptor for the C-type natriuretic peptide NPPC/CNP hormone. Has guanylate cyclase activity upon binding of its ligand. May play a role in the regulation of skeletal growth. The sequence is that of Atrial natriuretic peptide receptor 2 (NPR2) from Bos taurus (Bovine).